The chain runs to 531 residues: Peptide chain release factor 3 (531 aa).

The region spanning 13-282 (AKRRTFAIIS…TLIEHAPPPK (270 aa)) is the tr-type G domain. Residues 22-29 (SHPDAGKT), 90-94 (DTPGH), and 144-147 (NKLD) contribute to the GTP site.

Belongs to the TRAFAC class translation factor GTPase superfamily. Classic translation factor GTPase family. PrfC subfamily.

It localises to the cytoplasm. Increases the formation of ribosomal termination complexes and stimulates activities of RF-1 and RF-2. It binds guanine nucleotides and has strong preference for UGA stop codons. It may interact directly with the ribosome. The stimulation of RF-1 and RF-2 is significantly reduced by GTP and GDP, but not by GMP. The chain is Peptide chain release factor 3 from Psychrobacter sp. (strain PRwf-1).